The primary structure comprises 122 residues: uncharacterized protein (122 aa).

Positions 97-122 (TSRNGFSNPNKDGKKNDDDNNSSSKS) are disordered.

This is an uncharacterized protein from Mycoplasma genitalium (strain ATCC 33530 / DSM 19775 / NCTC 10195 / G37) (Mycoplasmoides genitalium).